The following is a 121-amino-acid chain: uncharacterized protein (121 aa).

The N-terminal stretch at 1 to 31 is a signal peptide; sequence MILNNKGFIRILEATIAGIMVILVFSYLVMS.

This sequence to B.burgdorferi BB0465 N-terminal region.

This is an uncharacterized protein from Methanocaldococcus jannaschii (strain ATCC 43067 / DSM 2661 / JAL-1 / JCM 10045 / NBRC 100440) (Methanococcus jannaschii).